Reading from the N-terminus, the 494-residue chain is tRNA-2-methylthio-N(6)-dimethylallyladenosine synthase (494 aa).

The 117-residue stretch at 5-121 folds into the MTTase N-terminal domain; sequence RTYQVRTYGC…LPALLERARV (117 aa). [4Fe-4S] cluster-binding residues include Cys14, Cys50, Cys84, Cys158, Cys162, and Cys165. The region spanning 144-374 is the Radical SAM core domain; sequence RESVYAAWVA…LELQERISEE (231 aa). Positions 377–446 constitute a TRAM domain; it reads AKFVGREVEV…PHHLVADSGI (70 aa). Basic and acidic residues predominate over residues 458 to 468; sequence WEARNAPERRP. Positions 458-494 are disordered; sequence WEARNAPERRPTGVLLGMPKVGAPEPQPSVVGGCCDS.

Belongs to the methylthiotransferase family. MiaB subfamily. Monomer. [4Fe-4S] cluster serves as cofactor.

It localises to the cytoplasm. It catalyses the reaction N(6)-dimethylallyladenosine(37) in tRNA + (sulfur carrier)-SH + AH2 + 2 S-adenosyl-L-methionine = 2-methylsulfanyl-N(6)-dimethylallyladenosine(37) in tRNA + (sulfur carrier)-H + 5'-deoxyadenosine + L-methionine + A + S-adenosyl-L-homocysteine + 2 H(+). In terms of biological role, catalyzes the methylthiolation of N6-(dimethylallyl)adenosine (i(6)A), leading to the formation of 2-methylthio-N6-(dimethylallyl)adenosine (ms(2)i(6)A) at position 37 in tRNAs that read codons beginning with uridine. The sequence is that of tRNA-2-methylthio-N(6)-dimethylallyladenosine synthase from Thermobifida fusca (strain YX).